Reading from the N-terminus, the 426-residue chain is MASKRLMLDVEEEDDESGACGQENFDPHDADMEYQAKRRKSAVQETPLQWMLKRHIPASTTVLSPITELSQNMNGARLDGTPKSTQRIPANRTLNNFNSLSSRTLGSFSSSCSSYESGNSLDDEYMDMFEMESAENHNLELPDDLEVLLSGQLKSESNLEEMSNKKGSLRRCLSMYPSEQPEEAVQEPDQETNMPMKKMQRKTLSMNDAEIMRALGDEPELIGDLSKPCTLPCLATGIRHRDLKTISSDTLARLIQGEFDEQLGSQGGYEIIDCRYPYEFLGGHIRGAKNLYTRGQIQEAFPTLTSNQENRRIYVFHCEFSSERGPKLLRYLRSNDRSQHTHNYPALDYPELYILHNGYKEFFGLYSQLCQPSQYVPMLAPAHNDEFRYFRAKTKSWQCGEGGDSGIGGGGSRGLRKSRSRLLYAE.

Residues 1–27 (MASKRLMLDVEEEDDESGACGQENFDP) form a disordered region. Positions 265-371 (SQGGYEIIDC…FFGLYSQLCQ (107 aa)) constitute a Rhodanese domain. The active site involves C318.

Belongs to the MPI phosphatase family. In terms of tissue distribution, expressed in developing male and female germ cells.

The enzyme catalyses O-phospho-L-tyrosyl-[protein] + H2O = L-tyrosyl-[protein] + phosphate. Required during meiosis. Regulates the transition from the extended G2 phase to the onset of the first meiotic division. This Drosophila melanogaster (Fruit fly) protein is Cdc25-like protein phosphatase twine (twe).